The chain runs to 80 residues: Small ribosomal subunit protein bS18c (80 aa).

The span at 1-19 (MKKFISRPKRSSRRRKKTP) shows a compositional bias: basic residues. The tract at residues 1-24 (MKKFISRPKRSSRRRKKTPIKPGE) is disordered.

This sequence belongs to the bacterial ribosomal protein bS18 family. In terms of assembly, part of the 30S ribosomal subunit.

It is found in the plastid. The protein resides in the chloroplast. The sequence is that of Small ribosomal subunit protein bS18c from Staurastrum punctulatum (Green alga).